The following is a 103-amino-acid chain: Urease subunit beta (103 aa).

This sequence belongs to the urease beta subunit family. In terms of assembly, heterotrimer of UreA (gamma), UreB (beta) and UreC (alpha) subunits. Three heterotrimers associate to form the active enzyme.

The protein localises to the cytoplasm. It catalyses the reaction urea + 2 H2O + H(+) = hydrogencarbonate + 2 NH4(+). It participates in nitrogen metabolism; urea degradation; CO(2) and NH(3) from urea (urease route): step 1/1. In Streptomyces coelicolor (strain ATCC BAA-471 / A3(2) / M145), this protein is Urease subunit beta.